A 546-amino-acid chain; its full sequence is Probable protein kinase UbiB (546 aa).

The region spanning 123 to 501 (DFQEIPLASA…RTNHGQALFL (379 aa)) is the Protein kinase domain. ATP contacts are provided by residues 129–137 (LASASISQV) and Lys-152. The active-site Proton acceptor is Asp-287. Transmembrane regions (helical) follow at residues 497–517 (QALF…FLYI) and 521–541 (YLKI…TIGW).

Belongs to the ABC1 family. UbiB subfamily.

The protein localises to the cell inner membrane. It functions in the pathway cofactor biosynthesis; ubiquinone biosynthesis [regulation]. Functionally, is probably a protein kinase regulator of UbiI activity which is involved in aerobic coenzyme Q (ubiquinone) biosynthesis. This chain is Probable protein kinase UbiB, found in Blochmanniella pennsylvanica (strain BPEN).